The primary structure comprises 312 residues: Ribosomal RNA small subunit methyltransferase H (312 aa).

Residues 35 to 37 (GGH), Asp-55, Phe-85, Asp-101, and Gln-108 contribute to the S-adenosyl-L-methionine site.

This sequence belongs to the methyltransferase superfamily. RsmH family.

The protein resides in the cytoplasm. The enzyme catalyses cytidine(1402) in 16S rRNA + S-adenosyl-L-methionine = N(4)-methylcytidine(1402) in 16S rRNA + S-adenosyl-L-homocysteine + H(+). Functionally, specifically methylates the N4 position of cytidine in position 1402 (C1402) of 16S rRNA. The chain is Ribosomal RNA small subunit methyltransferase H from Buchnera aphidicola subsp. Acyrthosiphon pisum (strain Tuc7).